Consider the following 156-residue polypeptide: Endoribonuclease YbeY (156 aa).

Positions 122, 126, and 132 each coordinate Zn(2+).

It belongs to the endoribonuclease YbeY family. Zn(2+) is required as a cofactor.

Its subcellular location is the cytoplasm. Functionally, single strand-specific metallo-endoribonuclease involved in late-stage 70S ribosome quality control and in maturation of the 3' terminus of the 16S rRNA. This chain is Endoribonuclease YbeY, found in Bacillus cereus (strain ATCC 10987 / NRS 248).